The following is a 125-amino-acid chain: Profilin-P (125 aa).

Serine 2 is subject to N-acetylserine.

It belongs to the profilin family. As to quaternary structure, occurs in many kinds of cells as a complex with monomeric actin in a 1:1 ratio.

Its subcellular location is the cytoplasm. The protein resides in the cytoskeleton. Functionally, binds to actin and affects the structure of the cytoskeleton. At high concentrations, profilin prevents the polymerization of actin, whereas it enhances it at low concentrations. By binding to PIP2, it inhibits the formation of IP3 and DG. In Physarum polycephalum (Slime mold), this protein is Profilin-P (PROP).